Here is a 444-residue protein sequence, read N- to C-terminus: Serine--tRNA ligase (444 aa).

Thr243–Glu245 provides a ligand contact to L-serine. Arg274–Glu276 is a binding site for ATP. Residue Glu297 participates in L-serine binding. Glu361 to Ser364 contacts ATP. Ser397 contacts L-serine.

Belongs to the class-II aminoacyl-tRNA synthetase family. Type-1 seryl-tRNA synthetase subfamily. In terms of assembly, homodimer. The tRNA molecule binds across the dimer.

The protein resides in the cytoplasm. It carries out the reaction tRNA(Ser) + L-serine + ATP = L-seryl-tRNA(Ser) + AMP + diphosphate + H(+). The enzyme catalyses tRNA(Sec) + L-serine + ATP = L-seryl-tRNA(Sec) + AMP + diphosphate + H(+). It participates in aminoacyl-tRNA biosynthesis; selenocysteinyl-tRNA(Sec) biosynthesis; L-seryl-tRNA(Sec) from L-serine and tRNA(Sec): step 1/1. In terms of biological role, catalyzes the attachment of serine to tRNA(Ser). Is also able to aminoacylate tRNA(Sec) with serine, to form the misacylated tRNA L-seryl-tRNA(Sec), which will be further converted into selenocysteinyl-tRNA(Sec). The sequence is that of Serine--tRNA ligase from Acidobacterium capsulatum (strain ATCC 51196 / DSM 11244 / BCRC 80197 / JCM 7670 / NBRC 15755 / NCIMB 13165 / 161).